A 154-amino-acid chain; its full sequence is NADPH-dependent 7-cyano-7-deazaguanine reductase (154 aa).

Residue Cys-52 is the Thioimide intermediate of the active site. The active-site Proton donor is the Asp-59. Substrate is bound by residues 74-76 and 93-94; these read VES and HE.

This sequence belongs to the GTP cyclohydrolase I family. QueF type 1 subfamily.

The protein localises to the cytoplasm. The catalysed reaction is 7-aminomethyl-7-carbaguanine + 2 NADP(+) = 7-cyano-7-deazaguanine + 2 NADPH + 3 H(+). The protein operates within tRNA modification; tRNA-queuosine biosynthesis. In terms of biological role, catalyzes the NADPH-dependent reduction of 7-cyano-7-deazaguanine (preQ0) to 7-aminomethyl-7-deazaguanine (preQ1). In Sinorhizobium medicae (strain WSM419) (Ensifer medicae), this protein is NADPH-dependent 7-cyano-7-deazaguanine reductase.